Here is a 139-residue protein sequence, read N- to C-terminus: Putative nickel-responsive regulator (139 aa).

Residues H79, H90, H92, and C98 each coordinate Ni(2+).

This sequence belongs to the transcriptional regulatory CopG/NikR family. Requires Ni(2+) as cofactor.

Functionally, transcriptional regulator. The sequence is that of Putative nickel-responsive regulator from Anaeromyxobacter dehalogenans (strain 2CP-1 / ATCC BAA-258).